The sequence spans 157 residues: S-ribosylhomocysteine lyase (157 aa).

Fe cation contacts are provided by His54, His58, and Cys126.

This sequence belongs to the LuxS family. As to quaternary structure, homodimer. Fe cation is required as a cofactor.

It carries out the reaction S-(5-deoxy-D-ribos-5-yl)-L-homocysteine = (S)-4,5-dihydroxypentane-2,3-dione + L-homocysteine. Involved in the synthesis of autoinducer 2 (AI-2) which is secreted by bacteria and is used to communicate both the cell density and the metabolic potential of the environment. The regulation of gene expression in response to changes in cell density is called quorum sensing. Catalyzes the transformation of S-ribosylhomocysteine (RHC) to homocysteine (HC) and 4,5-dihydroxy-2,3-pentadione (DPD). The chain is S-ribosylhomocysteine lyase from Bacillus licheniformis (strain ATCC 14580 / DSM 13 / JCM 2505 / CCUG 7422 / NBRC 12200 / NCIMB 9375 / NCTC 10341 / NRRL NRS-1264 / Gibson 46).